Here is a 259-residue protein sequence, read N- to C-terminus: Pyrroloquinoline-quinone synthase (259 aa).

This sequence belongs to the PqqC family.

The catalysed reaction is 6-(2-amino-2-carboxyethyl)-7,8-dioxo-1,2,3,4,7,8-hexahydroquinoline-2,4-dicarboxylate + 3 O2 = pyrroloquinoline quinone + 2 H2O2 + 2 H2O + H(+). The protein operates within cofactor biosynthesis; pyrroloquinoline quinone biosynthesis. Functionally, ring cyclization and eight-electron oxidation of 3a-(2-amino-2-carboxyethyl)-4,5-dioxo-4,5,6,7,8,9-hexahydroquinoline-7,9-dicarboxylic-acid to PQQ. The polypeptide is Pyrroloquinoline-quinone synthase (Bradyrhizobium diazoefficiens (strain JCM 10833 / BCRC 13528 / IAM 13628 / NBRC 14792 / USDA 110)).